A 346-amino-acid polypeptide reads, in one-letter code: MKTKRWFVDVTDELSTNDPQIAQAAALLRENEVVAFPTETVYGLGANAKNTDAVKKIYEAKGRPSDNPLIVHIADISQLEDLTGPAPEKAKTLMKRFWPGALTLILPCKPDALSPRVTAGLETVAIRMPDHPLALALIRESGLPIAAPSANLSGKPSPTKAEHVAHDLDGRIAGIVDGGPTGIGVESTVLSCADDIPVLLRPGGITKEQIEAVIGPIHVDKGLSDQNEKPISPGMKYTHYAPTAPLAICEGSPERIQHLIQEYQQGGRRVGVLTTEEKAGVYSADYVKSCGRRAQLETVAAGLYDALRSFDENKVDFIIAESFPDTGVGLAIMNRLMKAAGGRVIR.

A YrdC-like domain is found at 18–205 (DPQIAQAAAL…IPVLLRPGGI (188 aa)). Residue Thr-40 coordinates L-threonine. Arg-63 and Asn-67 together coordinate ATP. His-72 contacts L-threonine. Thr-123 contributes to the ATP binding site. Arg-127 and Ala-147 together coordinate L-threonine. Positions 149 and 157 each coordinate ATP. L-threonine is bound at residue Ser-187. The ATP site is built by Arg-201 and Tyr-240.

The protein belongs to the SUA5 family.

The protein resides in the cytoplasm. It catalyses the reaction L-threonine + hydrogencarbonate + ATP = L-threonylcarbamoyladenylate + diphosphate + H2O. Required for the formation of a threonylcarbamoyl group on adenosine at position 37 (t(6)A37) in tRNAs that read codons beginning with adenine. Catalyzes the conversion of L-threonine, HCO(3)(-)/CO(2) and ATP to give threonylcarbamoyl-AMP (TC-AMP) as the acyladenylate intermediate, with the release of diphosphate. Is also able to catalyze the reverse reaction in vitro, i.e. the formation of ATP from TC-AMP and PPi. The polypeptide is Threonylcarbamoyl-AMP synthase (ywlC) (Bacillus subtilis (strain 168)).